The chain runs to 411 residues: Probable protein S-acyltransferase 2 (411 aa).

2 helical membrane-spanning segments follow: residues 56–76 (LTTA…VFLI) and 85–105 (SLIL…LFLT). A DHHC domain is found at 160 to 210 (KFCDTCLLYRPPRASHCSICNNCVQRFDHHCPWVGQCIALRNYPYFICFIS). The active-site S-palmitoyl cysteine intermediate is the Cys190. Transmembrane regions (helical) follow at residues 205–225 (FICF…FSWV) and 245–265 (FVVL…LTVF). Phosphoserine is present on Ser405.

This sequence belongs to the DHHC palmitoyltransferase family. In terms of tissue distribution, expressed in flowers and pollen.

It is found in the cytoplasmic vesicle membrane. The catalysed reaction is L-cysteinyl-[protein] + hexadecanoyl-CoA = S-hexadecanoyl-L-cysteinyl-[protein] + CoA. Functionally, palmitoyl acyltransferase. The sequence is that of Probable protein S-acyltransferase 2 (PAT02) from Arabidopsis thaliana (Mouse-ear cress).